Here is a 188-residue protein sequence, read N- to C-terminus: UPF0340 protein SSU98_0310 (188 aa).

This sequence belongs to the UPF0340 family.

This Streptococcus suis (strain 98HAH33) protein is UPF0340 protein SSU98_0310.